We begin with the raw amino-acid sequence, 123 residues long: Large ribosomal subunit protein bL12 (123 aa).

The disordered stretch occupies residues Asn-96–Lys-123. The span at Gly-100–Glu-114 shows a compositional bias: basic and acidic residues.

This sequence belongs to the bacterial ribosomal protein bL12 family. Homodimer. Part of the ribosomal stalk of the 50S ribosomal subunit. Forms a multimeric L10(L12)X complex, where L10 forms an elongated spine to which 2 to 4 L12 dimers bind in a sequential fashion. Binds GTP-bound translation factors.

In terms of biological role, forms part of the ribosomal stalk which helps the ribosome interact with GTP-bound translation factors. Is thus essential for accurate translation. In Flavobacterium johnsoniae (strain ATCC 17061 / DSM 2064 / JCM 8514 / BCRC 14874 / CCUG 350202 / NBRC 14942 / NCIMB 11054 / UW101) (Cytophaga johnsonae), this protein is Large ribosomal subunit protein bL12.